Here is a 139-residue protein sequence, read N- to C-terminus: uncharacterized protein (139 aa).

One can recognise a VOC domain in the interval 9-133 (QAAQIRIARP…DGWRIVFMNS (125 aa)).

This is an uncharacterized protein from Bacillus subtilis (strain 168).